The sequence spans 306 residues: Ribonuclease Z (306 aa).

Positions 63, 65, 67, 68, 140, 211, and 269 each coordinate Zn(2+). The active-site Proton acceptor is D67.

It belongs to the RNase Z family. In terms of assembly, homodimer. The cofactor is Zn(2+).

It catalyses the reaction Endonucleolytic cleavage of RNA, removing extra 3' nucleotides from tRNA precursor, generating 3' termini of tRNAs. A 3'-hydroxy group is left at the tRNA terminus and a 5'-phosphoryl group is left at the trailer molecule.. Its function is as follows. Zinc phosphodiesterase, which displays some tRNA 3'-processing endonuclease activity. Probably involved in tRNA maturation, by removing a 3'-trailer from precursor tRNA. In Listeria innocua serovar 6a (strain ATCC BAA-680 / CLIP 11262), this protein is Ribonuclease Z.